The sequence spans 425 residues: Putative dipeptidase MGYG_00085 (425 aa).

The signal sequence occupies residues 1-31 (MAPERRSRLSETAGLFVSLLALTSIVPVQAV). The Zn(2+) site is built by histidine 56, aspartate 58, and glutamate 168. Cysteine 107 and cysteine 197 form a disulfide bridge. Position 195 (histidine 195) interacts with substrate. Residues histidine 239 and histidine 260 each coordinate Zn(2+). Substrate-binding residues include arginine 271 and aspartate 331. N-linked (GlcNAc...) asparagine glycosylation is present at asparagine 403.

The protein belongs to the metallo-dependent hydrolases superfamily. Peptidase M19 family. Requires Zn(2+) as cofactor.

It catalyses the reaction an L-aminoacyl-L-amino acid + H2O = 2 an L-alpha-amino acid. Its function is as follows. Hydrolyzes a wide range of dipeptides. The protein is Putative dipeptidase MGYG_00085 of Arthroderma gypseum (strain ATCC MYA-4604 / CBS 118893) (Microsporum gypseum).